The primary structure comprises 243 residues: UPF0246 protein SpyM51747 (243 aa).

The protein belongs to the UPF0246 family.

The sequence is that of UPF0246 protein SpyM51747 from Streptococcus pyogenes serotype M5 (strain Manfredo).